The primary structure comprises 185 residues: Translation initiation factor IF-3 (185 aa).

Belongs to the IF-3 family. As to quaternary structure, monomer.

It localises to the cytoplasm. Its function is as follows. IF-3 binds to the 30S ribosomal subunit and shifts the equilibrium between 70S ribosomes and their 50S and 30S subunits in favor of the free subunits, thus enhancing the availability of 30S subunits on which protein synthesis initiation begins. In Streptococcus pneumoniae serotype 19F (strain G54), this protein is Translation initiation factor IF-3.